We begin with the raw amino-acid sequence, 682 residues long: E3 ubiquitin-protein ligase RNF103 (682 aa).

4 helical membrane-spanning segments follow: residues 6–26, 326–346, 366–386, and 411–431; these read FFLL…EAIV, LFVL…FITQ, LLII…LDSF, and MFYS…GLLI. The segment covering 525-542 has biased composition (acidic residues); sequence EEMSESSQDTENDSDSDN. Positions 525–549 are disordered; the sequence is EEMSESSQDTENDSDSDNTDTFSSS. Residues 618 to 660 form an RING-type zinc finger; sequence CVVCLENFENGCLLMGLPCGHVFHQNCIVMWLAGGRHCCPVCR.

As to quaternary structure, interacts with DERL1 and VCP. In terms of tissue distribution, expressed in different tissues including hippocampus, cerebral cortex, heart, kidney, spleen and lung. Expression is increased in hippocampus and frontal cortex after chronic treatment with antidepressants.

The protein localises to the endoplasmic reticulum membrane. It catalyses the reaction S-ubiquitinyl-[E2 ubiquitin-conjugating enzyme]-L-cysteine + [acceptor protein]-L-lysine = [E2 ubiquitin-conjugating enzyme]-L-cysteine + N(6)-ubiquitinyl-[acceptor protein]-L-lysine.. It functions in the pathway protein modification; protein ubiquitination. Its function is as follows. Acts as an E2-dependent E3 ubiquitin-protein ligase, probably involved in the ER-associated protein degradation pathway. In Rattus norvegicus (Rat), this protein is E3 ubiquitin-protein ligase RNF103 (Rnf103).